Here is a 193-residue protein sequence, read N- to C-terminus: N-(5'-phosphoribosyl)anthranilate isomerase (193 aa).

It belongs to the TrpF family.

It catalyses the reaction N-(5-phospho-beta-D-ribosyl)anthranilate = 1-(2-carboxyphenylamino)-1-deoxy-D-ribulose 5-phosphate. Its pathway is amino-acid biosynthesis; L-tryptophan biosynthesis; L-tryptophan from chorismate: step 3/5. The polypeptide is N-(5'-phosphoribosyl)anthranilate isomerase (Streptococcus mutans serotype c (strain ATCC 700610 / UA159)).